A 401-amino-acid polypeptide reads, in one-letter code: S-adenosylmethionine synthase (401 aa).

136–141 (GQGSVD) is a binding site for ATP.

It belongs to the AdoMet synthase 2 family. Requires Mg(2+) as cofactor.

It carries out the reaction L-methionine + ATP + H2O = S-adenosyl-L-methionine + phosphate + diphosphate. It functions in the pathway amino-acid biosynthesis; S-adenosyl-L-methionine biosynthesis; S-adenosyl-L-methionine from L-methionine: step 1/1. Catalyzes the formation of S-adenosylmethionine from methionine and ATP. The sequence is that of S-adenosylmethionine synthase from Pyrococcus furiosus (strain ATCC 43587 / DSM 3638 / JCM 8422 / Vc1).